The following is a 416-amino-acid chain: MFSKSMTIEQVDPDLWRAIQGEVQRQEDHIELIASENYASPAVLQAQGTVLTNKYAEGYPGKRYYGGCKHVDIVEQLAIDRLRALFNAEYVNVQPHSGSQANAAVYLSALKPGDTLLGMSLAHGGHLTHGAPVNMSGKIFNSIAYGLDPETEEIDYTELEQLAHEHKPRMIVAGASSYARVIDWQAFRKIADNVGAYLFVDMAHYAGLIAAGYYPNPVGIADFVTSSTHKTLRGPRGGVIMAKPEHEKALNSAVFPQTQGGPLMHVIAAKAVAFKEAASPAFKDYQKQVIENARVMARVLQQRGLRIVSGHTDCHMFLVDLRAKNLTGREAETALETAHITVNKNAIPNDPQKPFVTSGVRIGTPAITTRGFKELESEQLANLVADVLEAPTNEAVLDQVAREAQALCAKFPVYGN.

(6S)-5,6,7,8-tetrahydrofolate is bound by residues Leu-121 and 125–127; that span reads GHL. Lys-230 carries the N6-(pyridoxal phosphate)lysine modification.

Belongs to the SHMT family. Homodimer. Pyridoxal 5'-phosphate is required as a cofactor.

The protein localises to the cytoplasm. The catalysed reaction is (6R)-5,10-methylene-5,6,7,8-tetrahydrofolate + glycine + H2O = (6S)-5,6,7,8-tetrahydrofolate + L-serine. It functions in the pathway one-carbon metabolism; tetrahydrofolate interconversion. It participates in amino-acid biosynthesis; glycine biosynthesis; glycine from L-serine: step 1/1. Its function is as follows. Catalyzes the reversible interconversion of serine and glycine with tetrahydrofolate (THF) serving as the one-carbon carrier. This reaction serves as the major source of one-carbon groups required for the biosynthesis of purines, thymidylate, methionine, and other important biomolecules. Also exhibits THF-independent aldolase activity toward beta-hydroxyamino acids, producing glycine and aldehydes, via a retro-aldol mechanism. The chain is Serine hydroxymethyltransferase from Nitrosomonas eutropha (strain DSM 101675 / C91 / Nm57).